A 178-amino-acid polypeptide reads, in one-letter code: Large ribosomal subunit protein uL6 (178 aa).

It belongs to the universal ribosomal protein uL6 family. As to quaternary structure, part of the 50S ribosomal subunit.

In terms of biological role, this protein binds to the 23S rRNA, and is important in its secondary structure. It is located near the subunit interface in the base of the L7/L12 stalk, and near the tRNA binding site of the peptidyltransferase center. The protein is Large ribosomal subunit protein uL6 of Staphylococcus aureus (strain Mu3 / ATCC 700698).